A 944-amino-acid polypeptide reads, in one-letter code: Proline and serine-rich protein 1 (944 aa).

Residue M1 is modified to N-acetylmethionine. 4 disordered regions span residues 233–285 (PPPY…PVPT), 369–396 (PGPS…SEAF), 608–633 (KTEP…HGTL), and 912–944 (ESYP…SGWQ). Positions 248-274 (LSNPSKPIQNQTFSTPASQLFSPHGSN) are enriched in polar residues. Low complexity predominate over residues 275–285 (PSTPAATPVPT). Residues 932 to 944 (FSLQPSLSQSGWQ) are compositionally biased toward polar residues.

In terms of assembly, interacts with TET2 and OGT; this interaction mediates TET2 O-GlcNAcylation and stability by promoting the interaction between OGT and TET2. Interacts with KDM6A. Interacts with TET1. In terms of processing, glycosylated. Interaction with OGT leads to GlcNAcylation.

Mediates OGT interaction with and O-GlcNAcylation of TET2 to control TET2 stabilization at enhancers and CpG islands (CGIs). The polypeptide is Proline and serine-rich protein 1 (Homo sapiens (Human)).